The chain runs to 342 residues: Terpene cyclase resF (342 aa).

The next 5 helical transmembrane spans lie at 5-25 (VSVV…GVFA), 81-101 (FMAQ…TEDF), 115-135 (WGVF…GVCF), 151-171 (STWI…MLIF), and 182-202 (IWGV…ASLL). Asn-224 is a glycosylation site (N-linked (GlcNAc...) asparagine). The next 3 membrane-spanning stretches (helical) occupy residues 229–249 (YVVA…FHLG), 269–289 (FLQI…WHEL), and 305–325 (YLLL…AWAL).

It belongs to the membrane-bound ascI terpene cyclase family.

It is found in the membrane. It participates in antifungal biosynthesis. In terms of biological role, cyclase; part of the gene cluster that mediates the biosynthesis of the tetrahydropyranyl antifungal agent restricticin that acts as an inhibitor of CYP51 and blocks the ergosterol biosynthesis. The highly reducing polyketide synthase resH, the short chain dehydrogenase resG, the cyclase resF, the FAD-dependent monooxygenase resA and the enoylreductase resD are required to generate the first stable intermediate desmethylrestrictinol. ResH with resD biosynthesize the first polyketide chain intermediate that is reduced by resG, followed by epoxidation by resA before 6-endo cyclization via epoxide opening by resF leads to desmethylrestrictinol. The methyltransferase resE then catalyzes the C4 O-methylation of desmethylrestrictinol to produce restrictinol, and the nonribosomal peptide synthetase resC catalyzes the C3 esterification of restrictinol with glycine that leads to restricticin. The chain is Terpene cyclase resF from Aspergillus sclerotiorum.